Consider the following 235-residue polypeptide: DUP240 protein DFP4 (235 aa).

The Cytoplasmic segment spans residues 1–44 (MSSELLISNSKPRPEGLRKLCEGETVILPRDITPSKCAYFLKQN). Residues 45–65 (IVFISYIFIHIIITIILNRLA) form a helical membrane-spanning segment. At 66–72 (LSAHGNT) the chain is on the extracellular side. A helical transmembrane segment spans residues 73 to 93 (LIIILAALLITISLFLLLLLP). At 94-235 (YLSCSRYKLR…DKYPEMGVTV (142 aa)) the chain is on the cytoplasmic side.

It belongs to the DUP/COS family. As to quaternary structure, interacts according to large scale protein interaction studies with BZZ1, SRB4 and SUA7.

The protein localises to the cell membrane. The sequence is that of DUP240 protein DFP4 from Saccharomyces cerevisiae (strain ATCC 204508 / S288c) (Baker's yeast).